A 476-amino-acid chain; its full sequence is Aspartyl/glutamyl-tRNA(Asn/Gln) amidotransferase subunit B (476 aa).

It belongs to the GatB/GatE family. GatB subfamily. In terms of assembly, heterotrimer of A, B and C subunits.

The enzyme catalyses L-glutamyl-tRNA(Gln) + L-glutamine + ATP + H2O = L-glutaminyl-tRNA(Gln) + L-glutamate + ADP + phosphate + H(+). The catalysed reaction is L-aspartyl-tRNA(Asn) + L-glutamine + ATP + H2O = L-asparaginyl-tRNA(Asn) + L-glutamate + ADP + phosphate + 2 H(+). Its function is as follows. Allows the formation of correctly charged Asn-tRNA(Asn) or Gln-tRNA(Gln) through the transamidation of misacylated Asp-tRNA(Asn) or Glu-tRNA(Gln) in organisms which lack either or both of asparaginyl-tRNA or glutaminyl-tRNA synthetases. The reaction takes place in the presence of glutamine and ATP through an activated phospho-Asp-tRNA(Asn) or phospho-Glu-tRNA(Gln). The polypeptide is Aspartyl/glutamyl-tRNA(Asn/Gln) amidotransferase subunit B (Lacticaseibacillus paracasei (strain ATCC 334 / BCRC 17002 / CCUG 31169 / CIP 107868 / KCTC 3260 / NRRL B-441) (Lactobacillus paracasei)).